The chain runs to 510 residues: 2,3-bisphosphoglycerate-independent phosphoglycerate mutase (510 aa).

Mn(2+) is bound by residues D13 and S63. Catalysis depends on S63, which acts as the Phosphoserine intermediate. Substrate-binding positions include H124, 154-155 (RD), R186, R192, 262-265 (RADR), and K334. Residues D401, H405, D442, H443, and H461 each coordinate Mn(2+).

It belongs to the BPG-independent phosphoglycerate mutase family. Monomer. Requires Mn(2+) as cofactor.

It carries out the reaction (2R)-2-phosphoglycerate = (2R)-3-phosphoglycerate. The protein operates within carbohydrate degradation; glycolysis; pyruvate from D-glyceraldehyde 3-phosphate: step 3/5. In terms of biological role, catalyzes the interconversion of 2-phosphoglycerate and 3-phosphoglycerate. The polypeptide is 2,3-bisphosphoglycerate-independent phosphoglycerate mutase (Vibrio vulnificus (strain YJ016)).